The primary structure comprises 203 residues: Phosphatidylethanolamine N-methyltransferase (203 aa).

It carries out the reaction a 1,2-diacyl-sn-glycero-3-phosphoethanolamine + S-adenosyl-L-methionine = a 1,2-diacyl-sn-glycero-3-phospho-N-methylethanolamine + S-adenosyl-L-homocysteine + H(+). It functions in the pathway phospholipid metabolism; phosphatidylcholine biosynthesis. This enzyme catalyzes three distinct methylation reactions for converting phosphatidylethanolamine to phosphatidylcholine. This Cereibacter sphaeroides (Rhodobacter sphaeroides) protein is Phosphatidylethanolamine N-methyltransferase (pmtA).